A 355-amino-acid polypeptide reads, in one-letter code: uncharacterized protein (355 aa).

The protein resides in the cytoplasm. This is an uncharacterized protein from Saccharomyces cerevisiae (strain ATCC 204508 / S288c) (Baker's yeast).